A 137-amino-acid polypeptide reads, in one-letter code: Large ribosomal subunit protein bL17 (137 aa).

Belongs to the bacterial ribosomal protein bL17 family. Part of the 50S ribosomal subunit. Contacts protein L32.

The chain is Large ribosomal subunit protein bL17 from Bradyrhizobium sp. (strain BTAi1 / ATCC BAA-1182).